Reading from the N-terminus, the 522-residue chain is MGKLLADKLGKLANKPVVGDVDIEDDRVFEHRESGSDSDMDSGDEELKKAHYAQVGESKLRKQLDSEKNLQELDTKYVGSVGSREDIYGENASSGSDSGSDSELEDDESDAPANDLQSNDESESVESESEESDHESGSESDNGEVLRKIVEKETRQAMNRISDLTKRDASKGYSILSQNKFFENILDTRIKLQKAMNSANVLPVTKASWKLELKEDSENKKLLEENLSMVENLLNRVINFRIDIQAKEGISTDSKLETSKKRDITDLNESTDALDKDLKKYRTAVLQKWSAKVSSASGSSAMKSSKFKAVNQSADAQVENQLADTPRLIKRTCLNRRNVLPINFTEDMEQGRLTKFESTSNTGENNDEDENADIPKNYDPRRKDNNAIDISTNPYIFDDGDFYRVLLNDLIDKKTSSANLGVTSSATNSAIIVSKSNYKLKKNVDTKASKGRKLNYSIQEPIANYEAPVSSGYKWSDEQIDEFFAGLLGQKINFNEDSEQDSESDVGDEEEAIKNDDIQIFA.

2 stretches are compositionally biased toward basic and acidic residues: residues 26-35 (DRVFEHRESG) and 58-75 (SKLR…ELDT). Residues 26–145 (DRVFEHRESG…SGSESDNGEV (120 aa)) are disordered. Acidic residues-rich tracts occupy residues 100–110 (SDSELEDDESD) and 118–133 (SNDE…EESD). A coiled-coil region spans residues 205–282 (TKASWKLELK…ALDKDLKKYR (78 aa)). Disordered regions lie at residues 356–385 (FEST…RKDN) and 496–522 (EDSE…QIFA). A compositionally biased stretch (basic and acidic residues) spans 376-385 (KNYDPRRKDN). Acidic residues predominate over residues 496–511 (EDSEQDSESDVGDEEE). The span at 512–522 (AIKNDDIQIFA) shows a compositional bias: basic and acidic residues.

It belongs to the AATF family.

It localises to the nucleus. Its subcellular location is the nucleolus. The polypeptide is Protein BFR2 (BFR2) (Candida glabrata (strain ATCC 2001 / BCRC 20586 / JCM 3761 / NBRC 0622 / NRRL Y-65 / CBS 138) (Yeast)).